The following is a 314-amino-acid chain: Acetaldehyde dehydrogenase (314 aa).

Residue 14–17 coordinates NAD(+); that stretch reads SGNI. The active-site Acyl-thioester intermediate is the Cys-132. NAD(+) contacts are provided by residues 163 to 171 and Asn-291; that span reads SAGPGTRAN.

It belongs to the acetaldehyde dehydrogenase family.

The catalysed reaction is acetaldehyde + NAD(+) + CoA = acetyl-CoA + NADH + H(+). This Polaromonas sp. (strain JS666 / ATCC BAA-500) protein is Acetaldehyde dehydrogenase.